The sequence spans 591 residues: 5'-nucleotidase domain-containing protein DDB_G0275467 (591 aa).

Composition is skewed to low complexity over residues 38–50 (STTTTSGIKSYST) and 68–78 (QHQQQQPQQHQ). Positions 38–88 (STTTTSGIKSYSTHNRSNNDTHTSKSNTIDQHQQQQPQQHQNNDNKHLFTP) are disordered. The active-site Nucleophile is Asp165. Residues Asp165 and Asp167 each contribute to the Mg(2+) site. The active-site Proton donor is Asp167. Position 305-313 (305-313 (TAAVGKVHL)) interacts with substrate. Residue Asp450 coordinates Mg(2+).

Belongs to the 5'(3')-deoxyribonucleotidase family. It depends on Mg(2+) as a cofactor.

The sequence is that of 5'-nucleotidase domain-containing protein DDB_G0275467 from Dictyostelium discoideum (Social amoeba).